A 384-amino-acid chain; its full sequence is MDPAGGPRGVLPRPCRVLVLLNPRGGKGKALQLFRSHVQPLLAEAEISFTLMLTERRNHARELVRSEELGRWDALVVMSGDGLMHEVVNGLMERPDWETAIQKPLCSLPAGSGNALAASLNHYAGYEQVTNEDLLTNCTLLLCRRLLSPMNLLSLHTASGLRLFSVLSLAWGFIADVDLESEKYRRLGEMRFTLGTFLRLAALRTYRGRLAYLPVGRVGSKTPASPVVVQQGPVDAHLVPLEEPVPSHWTVVPDEDFVLVLALLHSHLGSEMFAAPMGRCAAGVMHLFYVRAGVSRAMLLRLFLAMEKGRHMEYECPYLVYVPVVAFRLEPKDGKGVFAVDGELMVSEAVQGQVHPNYFWMVSGCVEPPPSWKPQQMPPPEEPL.

The DAGKc domain maps to 12-159 (PRPCRVLVLL…MNLLSLHTAS (148 aa)). Residues 22–24 (NPR) and 54–58 (TERRN) contribute to the ATP site. Residue 79–82 (SGDG) coordinates substrate. Asp81 serves as the catalytic Proton donor/acceptor. ATP is bound by residues Glu86 and 111 to 113 (GSG). Short sequence motifs (nuclear export signal) lie at residues 147–155 (LSPMNLLSL) and 161–169 (LRLFSVLSL). A substrate-binding site is contributed by Asp178. Positions 185 and 191 each coordinate ATP. Thr193 carries the post-translational modification Phosphothreonine. Ser225 bears the Phosphoserine mark. 341–343 (DGE) contributes to the ATP binding site.

As to quaternary structure, interacts with ACY1. Binds to calmodulin. Interacts with SPHKAP. Interacts with CIB1, the interaction occurs in a calcium-dependent manner. Interacts with TRAF2. Interacts with EEF1A1; the interaction enhances SPHK1 kinase activity. Mg(2+) serves as cofactor. Widely expressed with highest levels in adult liver, kidney, heart and skeletal muscle. Expressed in brain cortex (at protein level).

It is found in the cytoplasm. Its subcellular location is the nucleus. The protein localises to the cell membrane. It localises to the endosome membrane. The protein resides in the membrane. It is found in the clathrin-coated pit. Its subcellular location is the synapse. It carries out the reaction a sphingoid base + ATP = a sphingoid 1-phosphate + ADP + H(+). It catalyses the reaction L-seryl-[protein] + acetyl-CoA = O-acetyl-L-seryl-[protein] + CoA. The catalysed reaction is sphinganine + ATP = sphinganine 1-phosphate + ADP + H(+). The enzyme catalyses sphing-4-enine + ATP = sphing-4-enine 1-phosphate + ADP + H(+). It carries out the reaction 1-O-hexadecyl-2-amino-sn-glycerol + ATP = 1-O-hexadecyl-2-desoxy-2-amino-sn-glycero-3-phosphate + ADP + H(+). With respect to regulation, acetyltransferase activity increases in presence of the kinase substrate, sphingosine. In Purkinje cells, kinase activity on sphingosine increases in presence of VEGFA. In neurons, kinase activity increases during the first 24h in presence of Amyloid-beta protein 42 to decrease after 96h. In terms of biological role, catalyzes the phosphorylation of sphingosine to form sphingosine 1-phosphate (SPP), a lipid mediator with both intra- and extracellular functions. Also acts on D-erythro-sphingosine and to a lesser extent sphinganine, but not other lipids, such as D,L-threo-dihydrosphingosine, N,N-dimethylsphingosine, diacylglycerol, ceramide, or phosphatidylinositol. In contrast to proapoptotic SPHK2, has a negative effect on intracellular ceramide levels, enhances cell growth and inhibits apoptosis. Involved in the regulation of inflammatory response and neuroinflammation. Via the product sphingosine 1-phosphate, stimulates TRAF2 E3 ubiquitin ligase activity, and promotes activation of NF-kappa-B in response to TNF signaling leading to IL17 secretion. In response to TNF and in parallel to NF-kappa-B activation, negatively regulates RANTES induction through p38 MAPK signaling pathway. Involved in endocytic membrane trafficking induced by sphingosine, recruited to dilate endosomes, also plays a role on later stages of endosomal maturation and membrane fusion independently of its kinase activity. In Purkinje cells, seems to be also involved in the regulation of autophagosome-lysosome fusion upon VEGFA. Functionally, has serine acetyltransferase activity on PTGS2/COX2 in an acetyl-CoA dependent manner. The acetyltransferase activity increases in presence of the kinase substrate, sphingosine. During neuroinflammation, through PTGS2 acetylation, promotes neuronal secretion of specialized preresolving mediators (SPMs), especially 15-R-lipoxin A4, which results in an increase of phagocytic microglia. In Homo sapiens (Human), this protein is Sphingosine kinase 1.